The sequence spans 359 residues: Glycerol-3-phosphate dehydrogenase [NAD(P)+] (359 aa).

Residues Thr-11, Trp-12, Arg-32, and Lys-107 each contribute to the NADPH site. Residues Lys-107 and Gly-138 each coordinate sn-glycerol 3-phosphate. NADPH is bound at residue Ala-142. Positions 193, 246, 256, 257, and 258 each coordinate sn-glycerol 3-phosphate. Lys-193 (proton acceptor) is an active-site residue. Arg-257 serves as a coordination point for NADPH. NADPH-binding residues include Val-281 and Glu-283.

The protein belongs to the NAD-dependent glycerol-3-phosphate dehydrogenase family.

The protein resides in the cytoplasm. It carries out the reaction sn-glycerol 3-phosphate + NAD(+) = dihydroxyacetone phosphate + NADH + H(+). The catalysed reaction is sn-glycerol 3-phosphate + NADP(+) = dihydroxyacetone phosphate + NADPH + H(+). Its pathway is membrane lipid metabolism; glycerophospholipid metabolism. Catalyzes the reduction of the glycolytic intermediate dihydroxyacetone phosphate (DHAP) to sn-glycerol 3-phosphate (G3P), the key precursor for phospholipid synthesis. This Dehalococcoides mccartyi (strain ATCC BAA-2266 / KCTC 15142 / 195) (Dehalococcoides ethenogenes (strain 195)) protein is Glycerol-3-phosphate dehydrogenase [NAD(P)+].